Reading from the N-terminus, the 997-residue chain is uncharacterized protein (997 aa).

Belongs to the MG414/MG415 family.

This is an uncharacterized protein from Mycoplasma pneumoniae (strain ATCC 29342 / M129 / Subtype 1) (Mycoplasmoides pneumoniae).